Here is a 232-residue protein sequence, read N- to C-terminus: Large ribosomal subunit protein uL1 (232 aa).

This sequence belongs to the universal ribosomal protein uL1 family. Part of the 50S ribosomal subunit.

Functionally, binds directly to 23S rRNA. The L1 stalk is quite mobile in the ribosome, and is involved in E site tRNA release. In terms of biological role, protein L1 is also a translational repressor protein, it controls the translation of the L11 operon by binding to its mRNA. The polypeptide is Large ribosomal subunit protein uL1 (Aliarcobacter butzleri (strain RM4018) (Arcobacter butzleri)).